Here is a 137-residue protein sequence, read N- to C-terminus: Large-conductance mechanosensitive channel (137 aa).

A run of 2 helical transmembrane segments spans residues 16-36 (VIDLAVGVIIGGAFGKIVDSI) and 83-103 (GNFITVALNFAILAFIIFLMI).

The protein belongs to the MscL family. Homopentamer.

The protein resides in the cell inner membrane. Channel that opens in response to stretch forces in the membrane lipid bilayer. May participate in the regulation of osmotic pressure changes within the cell. The polypeptide is Large-conductance mechanosensitive channel (Methylibium petroleiphilum (strain ATCC BAA-1232 / LMG 22953 / PM1)).